Reading from the N-terminus, the 526-residue chain is Tyrosine-protein kinase transforming protein Src (526 aa).

Residues 1-15 (MGSSKSKPKGPSQRR) are compositionally biased toward basic residues. The segment at 1–59 (MGSSKSKPKGPSQRRRSLEPPDSTHHGGFPASQTPNKTAAPDTHRTPSRSFGTVATEPK) is disordered. Gly2 carries N-myristoyl glycine; by host lipidation. A compositionally biased stretch (basic and acidic residues) spans 16–25 (RSLEPPDSTH). The 62-residue stretch at 81 to 142 (GGVTTFVALY…PSNYVAPSDS (62 aa)) folds into the SH3 domain. The SH2 domain maps to 148 to 245 (WYFGKITRRE…GLCHRLTNVC (98 aa)). One can recognise a Protein kinase domain in the interval 267–517 (LRLEVKLGQG…TFEYLQAQLL (251 aa)). ATP is bound by residues 273-281 (LGQGCFGEV) and Lys295. The Proton acceptor role is filled by Asp386. Tyr416 bears the Phosphotyrosine; by autocatalysis mark.

The protein belongs to the protein kinase superfamily. Tyr protein kinase family. SRC subfamily. As to quaternary structure, homodimer. Post-translationally, the phosphorylated form is termed pp60v-src.

It catalyses the reaction L-tyrosyl-[protein] + ATP = O-phospho-L-tyrosyl-[protein] + ADP + H(+). Its function is as follows. This phosphoprotein, required for both the initiation and the maintenance of neoplastic transformation, is a protein kinase that catalyzes the phosphorylation of tyrosine residues in vitro. The sequence is that of Tyrosine-protein kinase transforming protein Src (V-SRC) from Rous sarcoma virus subgroup E (strain Schmidt-Ruppin) (RSV-SR-E).